The sequence spans 159 residues: Endoribonuclease YbeY (159 aa).

Zn(2+) is bound by residues H114, H118, and H124.

It belongs to the endoribonuclease YbeY family. It depends on Zn(2+) as a cofactor.

Its subcellular location is the cytoplasm. Functionally, single strand-specific metallo-endoribonuclease involved in late-stage 70S ribosome quality control and in maturation of the 3' terminus of the 16S rRNA. This chain is Endoribonuclease YbeY, found in Pectobacterium carotovorum subsp. carotovorum (strain PC1).